A 144-amino-acid polypeptide reads, in one-letter code: Urease accessory protein UreE (144 aa).

This sequence belongs to the UreE family.

Its subcellular location is the cytoplasm. Involved in urease metallocenter assembly. Binds nickel. Probably functions as a nickel donor during metallocenter assembly. The chain is Urease accessory protein UreE from Thermosynechococcus vestitus (strain NIES-2133 / IAM M-273 / BP-1).